Reading from the N-terminus, the 310-residue chain is L-lactate dehydrogenase (310 aa).

NAD(+) contacts are provided by Val-11, Asp-32, and Arg-37. Substrate is bound by residues Gln-79, Arg-85, and 117-120 (NPVD). Residues 115–117 (VTN) and Thr-140 each bind NAD(+). 145–148 (DTAR) contributes to the substrate binding site. Beta-D-fructose 1,6-bisphosphate is bound by residues Arg-150 and His-165. Residue His-172 is the Proton acceptor of the active site. Residue Tyr-221 is modified to Phosphotyrosine. Thr-230 contacts substrate.

It belongs to the LDH/MDH superfamily. LDH family. In terms of assembly, homotetramer.

It localises to the cytoplasm. It catalyses the reaction (S)-lactate + NAD(+) = pyruvate + NADH + H(+). Its pathway is fermentation; pyruvate fermentation to lactate; (S)-lactate from pyruvate: step 1/1. With respect to regulation, allosterically activated by fructose 1,6-bisphosphate (FBP). In terms of biological role, catalyzes the conversion of lactate to pyruvate. This is L-lactate dehydrogenase from Fervidobacterium nodosum (strain ATCC 35602 / DSM 5306 / Rt17-B1).